We begin with the raw amino-acid sequence, 272 residues long: Indole-3-glycerol phosphate synthase (272 aa).

Belongs to the TrpC family.

The catalysed reaction is 1-(2-carboxyphenylamino)-1-deoxy-D-ribulose 5-phosphate + H(+) = (1S,2R)-1-C-(indol-3-yl)glycerol 3-phosphate + CO2 + H2O. It participates in amino-acid biosynthesis; L-tryptophan biosynthesis; L-tryptophan from chorismate: step 4/5. The sequence is that of Indole-3-glycerol phosphate synthase from Arthrobacter sp. (strain FB24).